We begin with the raw amino-acid sequence, 259 residues long: Protein unc-50 homolog (259 aa).

Residue M1 is modified to N-acetylmethionine. The Cytoplasmic portion of the chain corresponds to 1-82 (MLPSTSLNSS…TKDQWARDDP (82 aa)). Residue S6 is modified to Phosphoserine. The helical transmembrane segment at 83-103 (AFLVLLSIWLCVSTIGFGFVL) threads the bilayer. Topologically, residues 104 to 115 (DMGFFETIKLLL) are lumenal. The chain crosses the membrane as a helical span at residues 116–136 (WVVFIDCVGVGLLISTLMWFI). Over 137-163 (SNKYLVKRQSRDYDVEWGYAFDVHLNA) the chain is Cytoplasmic. Residues 164 to 184 (FYPLLVILHFIQLFFINHVIL) traverse the membrane as a helical segment. The Lumenal segment spans residues 185–187 (TDT). The chain crosses the membrane as a helical span at residues 188–208 (FIGYLVGNTLWLIAVGYYIYV). Residues 209 to 222 (TFLGYSALPFLKNT) are Cytoplasmic-facing. The chain crosses the membrane as a helical span at residues 223-243 (VVLLYPFAPLIVLYGLSLALG). The Lumenal segment spans residues 244–259 (WNFTHTLCSFYKYRVK).

Belongs to the unc-50 family. In terms of tissue distribution, expressed in brain, kidney and testis, and at lower levels in heart.

Its subcellular location is the nucleus inner membrane. It is found in the golgi apparatus membrane. Involved in the cell surface expression of neuronal nicotinic receptors. Binds RNA. In Rattus norvegicus (Rat), this protein is Protein unc-50 homolog (Unc50).